We begin with the raw amino-acid sequence, 435 residues long: Adenylosuccinate synthetase (435 aa).

Residues 20–26 (GDEGKGK) and 48–50 (GHT) contribute to the GTP site. D21 functions as the Proton acceptor in the catalytic mechanism. 2 residues coordinate Mg(2+): D21 and G48. IMP is bound by residues 21–24 (DEGK), 46–49 (NAGH), T134, R148, Q229, T244, and R308. H49 serves as the catalytic Proton donor. 304 to 310 (TTTGRPR) is a substrate binding site. GTP-binding positions include R310, 336–338 (KVD), and 422–424 (SMG).

The protein belongs to the adenylosuccinate synthetase family. Homodimer. Mg(2+) is required as a cofactor.

The protein localises to the cytoplasm. It catalyses the reaction IMP + L-aspartate + GTP = N(6)-(1,2-dicarboxyethyl)-AMP + GDP + phosphate + 2 H(+). It functions in the pathway purine metabolism; AMP biosynthesis via de novo pathway; AMP from IMP: step 1/2. In terms of biological role, plays an important role in the de novo pathway of purine nucleotide biosynthesis. Catalyzes the first committed step in the biosynthesis of AMP from IMP. This Thermoplasma acidophilum (strain ATCC 25905 / DSM 1728 / JCM 9062 / NBRC 15155 / AMRC-C165) protein is Adenylosuccinate synthetase.